Consider the following 328-residue polypeptide: tRNA uridine(34) hydroxylase (328 aa).

The Rhodanese domain occupies 122–218 (QENRCLVLDV…YGLKMGTGKW (97 aa)). Cys178 (cysteine persulfide intermediate) is an active-site residue.

This sequence belongs to the TrhO family.

It carries out the reaction uridine(34) in tRNA + AH2 + O2 = 5-hydroxyuridine(34) in tRNA + A + H2O. In terms of biological role, catalyzes oxygen-dependent 5-hydroxyuridine (ho5U) modification at position 34 in tRNAs. This chain is tRNA uridine(34) hydroxylase, found in Chlamydia muridarum (strain MoPn / Nigg).